A 289-amino-acid polypeptide reads, in one-letter code: Protoheme IX farnesyltransferase (289 aa).

9 consecutive transmembrane segments (helical) span residues valine 18–proline 38, glycine 40–phenylalanine 60, valine 87–valine 107, leucine 111–phenylalanine 131, asparagine 139–glycine 159, serine 168–leucine 188, serine 212–serine 232, methionine 234–tyrosine 254, and phenylalanine 269–isoleucine 289.

Belongs to the UbiA prenyltransferase family. Protoheme IX farnesyltransferase subfamily.

It localises to the cell inner membrane. The enzyme catalyses heme b + (2E,6E)-farnesyl diphosphate + H2O = Fe(II)-heme o + diphosphate. Its pathway is porphyrin-containing compound metabolism; heme O biosynthesis; heme O from protoheme: step 1/1. Its function is as follows. Converts heme B (protoheme IX) to heme O by substitution of the vinyl group on carbon 2 of heme B porphyrin ring with a hydroxyethyl farnesyl side group. This Leptospira interrogans serogroup Icterohaemorrhagiae serovar copenhageni (strain Fiocruz L1-130) protein is Protoheme IX farnesyltransferase.